The following is a 332-amino-acid chain: Putative pumilio homolog 20 (332 aa).

Residues 1–332 (MAHQLRFAAA…NIASILNSIR (332 aa)) form the PUM-HD domain. 2 Pumilio repeats span residues 89 to 124 (SDPD…FAAA) and 125 to 159 (ILRR…AMYE). One copy of the Pumilio 3; degenerate repeat lies at 160–191 (HILHYASHIARDKHGNLALNDIITDAYRNKLF). Pumilio repeat units lie at residues 192 to 228 (DVIA…NIVV), 229 to 266 (SLRG…ELME), and 267 to 303 (CEGD…DLFW).

Its subcellular location is the cytoplasm. Sequence-specific RNA-binding protein that regulates translation and mRNA stability by binding the 3'-UTR of target mRNAs. In Arabidopsis thaliana (Mouse-ear cress), this protein is Putative pumilio homolog 20 (APUM20).